Here is a 2076-residue protein sequence, read N- to C-terminus: Protein Ycf2 (2076 aa).

An ATP-binding site is contributed by 1458–1465; that stretch reads GSIGTGRS.

It belongs to the Ycf2 family.

It is found in the plastid. The protein localises to the chloroplast stroma. Its function is as follows. Probable ATPase of unknown function. Its presence in a non-photosynthetic plant (Epifagus virginiana) and experiments in tobacco indicate that it has an essential function which is probably not related to photosynthesis. This Acorus calamus (Sweet flag) protein is Protein Ycf2.